The chain runs to 475 residues: Erythroid membrane-associated protein (475 aa).

The N-terminal stretch at 1-29 (MEMASSAGSWLSGCLIPLVFLRLSVHVSG) is a signal peptide. An Ig-like V-type domain is found at 30–140 (HAGDAGKFHV…GNLSKEDTVI (111 aa)). Residues 30 to 155 (HAGDAGKFHV…PSVGSLSPSA (126 aa)) lie on the Extracellular side of the membrane. Cys50 and Cys126 are oxidised to a cystine. Asn132 carries an N-linked (GlcNAc...) asparagine glycan. The chain crosses the membrane as a helical span at residues 156-176 (VALAVILPVLVLLIMVCLCLI). The Cytoplasmic segment spans residues 177-475 (WKQRRAKEKL…ALQELKAPSF (299 aa)). Residues 220–418 (KLKRAAANSG…LVICSELHKS (199 aa)) form the B30.2/SPRY domain. At Ser418 the chain carries Phosphoserine.

This sequence belongs to the immunoglobulin superfamily. BTN/MOG family. Glycosylated. Expressed in erythroid-enriched bone marrow (at protein level). Highly expressed in bone marrow and to a lower extent in leukocytes, thymus, lymph node and spleen.

The protein localises to the cell membrane. It is found in the cytoplasm. Its function is as follows. Possible role as a cell-adhesion or receptor molecule of erythroid cells. This is Erythroid membrane-associated protein (ERMAP) from Homo sapiens (Human).